A 209-amino-acid chain; its full sequence is uncharacterized protein (209 aa).

This is an uncharacterized protein from Klebsiella pneumoniae.